We begin with the raw amino-acid sequence, 264 residues long: MKTYLQLLEHILQHGVEKSDRTGTGTLSVFGYQMRFDLAQGFPLVTTKKLHTRSIVHELLWFLRGDTNISYLKENGVTIWDEWADNNGDLGPVYGKQWRSWPTADGRTIDQLSEVVQQIKSNPDSRRLIVSAWNVGELDKMALMPCHALFQFYVANNKLSCQLYQRSADVFLGVPFNIASYSLLTHMVAQQCNLDVAEFIWTGGDCHLYLNHLEQAQIQLTREPLPLPSLAIKRKPASLFDYAYEDFEFLNYQSHPAIKAPIAV.

Residue arginine 21 participates in dUMP binding. Histidine 51 contacts (6R)-5,10-methylene-5,6,7,8-tetrahydrofolate. Position 126–127 (126–127) interacts with dUMP; it reads RR. The active-site Nucleophile is the cysteine 146. Residues 166–169, asparagine 177, and 207–209 contribute to the dUMP site; these read RSAD and HLY. A (6R)-5,10-methylene-5,6,7,8-tetrahydrofolate-binding site is contributed by aspartate 169. Alanine 263 serves as a coordination point for (6R)-5,10-methylene-5,6,7,8-tetrahydrofolate.

This sequence belongs to the thymidylate synthase family. Bacterial-type ThyA subfamily. Homodimer.

Its subcellular location is the cytoplasm. It catalyses the reaction dUMP + (6R)-5,10-methylene-5,6,7,8-tetrahydrofolate = 7,8-dihydrofolate + dTMP. It participates in pyrimidine metabolism; dTTP biosynthesis. Functionally, catalyzes the reductive methylation of 2'-deoxyuridine-5'-monophosphate (dUMP) to 2'-deoxythymidine-5'-monophosphate (dTMP) while utilizing 5,10-methylenetetrahydrofolate (mTHF) as the methyl donor and reductant in the reaction, yielding dihydrofolate (DHF) as a by-product. This enzymatic reaction provides an intracellular de novo source of dTMP, an essential precursor for DNA biosynthesis. The polypeptide is Thymidylate synthase (Legionella pneumophila subsp. pneumophila (strain Philadelphia 1 / ATCC 33152 / DSM 7513)).